A 132-amino-acid polypeptide reads, in one-letter code: Large ribosomal subunit protein bL12 (132 aa).

The protein belongs to the bacterial ribosomal protein bL12 family. Homodimer. Part of the ribosomal stalk of the 50S ribosomal subunit. Forms a multimeric L10(L12)X complex, where L10 forms an elongated spine to which 2 to 4 L12 dimers bind in a sequential fashion. Binds GTP-bound translation factors.

In terms of biological role, forms part of the ribosomal stalk which helps the ribosome interact with GTP-bound translation factors. Is thus essential for accurate translation. The sequence is that of Large ribosomal subunit protein bL12 from Prochlorococcus marinus (strain MIT 9211).